We begin with the raw amino-acid sequence, 1056 residues long: MPRDPSIKKVLLIGSGPIQIGQAAEFDFSGSQACRALREEGVSVVLVNSNPATIQTDPDMADVTYVEPLQADIIAKIIKKEKPDGILSGMGGQTGLNLTAELAEMGALEGVKILGTPLKAIYEGEDREKFRDLMNRIGEPVPRSVIVSSLDQLEHAASVVGFPAIIRPAYTLGGAGGGIAYNLDELRRIVELGLGKSRIHQVLIEESVAGWKEIEFEVMRDANDTCITICGMENVDPMGVHTGESVVVAPILTLRDDEFHLLRNAALKIIRALDVQGGCNIQFAFKGDDEYRVIEVNPRVSRSSALASKATGYPIARVASKIAIGLRLDEILNTVTGKTPASFEPSIDYVVVKVPRWPFDKFKTADRTLTTAMKSTGEVMAIGRCVEEAFLKALRSLDTDVEHHTVLSELKMILSRPTDERFGALFDALRQGMTLNEIAEITRITPFWLEKIQNIVEMEKALTAHPDDATILKAKEFGFSDLEIAQYSGKDVSEVESKVGLPVYKMVDTCAAEFPAQTPYFYSTYGDKVCEVTHSDRKKVMILGSGPIRIGQGIEFDYCTVHAVTALREDGYEVHVVNNNPETVSTDFDTSDRLFFEPMTLEDVSHILQKDDYYGVMVQFGGQNAVNLAVPLKNEIDRLNLKTRILGTTPDAMDMAEDRDRFSVLLDSLSIPTPPNGSAYSEQEAYATAERIGYPVLVRPSYVLGGRAMEIVHDDTELATYMREAVRVSKSHPVLIDRFLQNAIELDVDAVCDGTDVIIGGIMEHIETAGVHSGDSACVIPPQSLSPEILADVRDYTRKIALGLGVVGLVNIQFAVQGSTVYVLEANPRASRTVPFVAKSVGIPLAKIAARVMMGERLADMPYKEIEVSHVAVKEVLLPFNKLPGVDTVLGPEMKSTGEVMGIDYDFGRAYYKASIAAHNRLPKSGNVFISVTDDLKDQILQVAKTFTENGLSIYATSGTVEFFAERGITANLVRKIAEGSPNVLDMLRAGEISLIINNFADKQSRHDHQQIMRVAVDYGTPYITTLQAAVAAAEAINSVREENLTIEPLQHYIGR.

The carboxyphosphate synthetic domain stretch occupies residues 1-398; that stretch reads MPRDPSIKKV…AFLKALRSLD (398 aa). Residues arginine 127, arginine 167, glycine 173, glycine 174, glutamate 206, valine 208, glutamate 213, glycine 239, valine 240, histidine 241, glutamine 282, and glutamate 295 each contribute to the ATP site. The 194-residue stretch at 131–324 folds into the ATP-grasp 1 domain; that stretch reads RDLMNRIGEP…IARVASKIAI (194 aa). The Mg(2+) site is built by glutamine 282, glutamate 295, and asparagine 297. 3 residues coordinate Mn(2+): glutamine 282, glutamate 295, and asparagine 297. The interval 399–532 is oligomerization domain; the sequence is TDVEHHTVLS…STYGDKVCEV (134 aa). The carbamoyl phosphate synthetic domain stretch occupies residues 533–921; that stretch reads THSDRKKVMI…YKASIAAHNR (389 aa). An ATP-grasp 2 domain is found at 663-854; sequence SVLLDSLSIP…LAKIAARVMM (192 aa). ATP-binding residues include arginine 699, arginine 738, leucine 740, glutamate 745, glycine 770, valine 771, histidine 772, serine 773, glutamine 813, and glutamate 825. Glutamine 813, glutamate 825, and asparagine 827 together coordinate Mg(2+). Mn(2+)-binding residues include glutamine 813, glutamate 825, and asparagine 827. An MGS-like domain is found at 920–1056; that stretch reads NRLPKSGNVF…IEPLQHYIGR (137 aa). The allosteric domain stretch occupies residues 922–1056; it reads LPKSGNVFIS…IEPLQHYIGR (135 aa).

This sequence belongs to the CarB family. In terms of assembly, composed of two chains; the small (or glutamine) chain promotes the hydrolysis of glutamine to ammonia, which is used by the large (or ammonia) chain to synthesize carbamoyl phosphate. Tetramer of heterodimers (alpha,beta)4. Requires Mg(2+) as cofactor. The cofactor is Mn(2+).

The catalysed reaction is hydrogencarbonate + L-glutamine + 2 ATP + H2O = carbamoyl phosphate + L-glutamate + 2 ADP + phosphate + 2 H(+). It catalyses the reaction hydrogencarbonate + NH4(+) + 2 ATP = carbamoyl phosphate + 2 ADP + phosphate + 2 H(+). It participates in amino-acid biosynthesis; L-arginine biosynthesis; carbamoyl phosphate from bicarbonate: step 1/1. It functions in the pathway pyrimidine metabolism; UMP biosynthesis via de novo pathway; (S)-dihydroorotate from bicarbonate: step 1/3. Its function is as follows. Large subunit of the glutamine-dependent carbamoyl phosphate synthetase (CPSase). CPSase catalyzes the formation of carbamoyl phosphate from the ammonia moiety of glutamine, carbonate, and phosphate donated by ATP, constituting the first step of 2 biosynthetic pathways, one leading to arginine and/or urea and the other to pyrimidine nucleotides. The large subunit (synthetase) binds the substrates ammonia (free or transferred from glutamine from the small subunit), hydrogencarbonate and ATP and carries out an ATP-coupled ligase reaction, activating hydrogencarbonate by forming carboxy phosphate which reacts with ammonia to form carbamoyl phosphate. The polypeptide is Carbamoyl phosphate synthase large chain (Methanospirillum hungatei JF-1 (strain ATCC 27890 / DSM 864 / NBRC 100397 / JF-1)).